Here is a 200-residue protein sequence, read N- to C-terminus: MELMVKGADALTVSETTFGREFNEALVHQVVVAFAAGARQGTRAQKTRSEVSGGGAKPWRQKGTGRARAGTIRSPIWRTGGVTFAAKSQDHSQKVNKKMYRGAMKSILSELVRQERLIVVDNFSVEAPKTKELVAKLKELELTDALIVTSEVDENLFLAARNLYKVDARDVAGIDPVSLIAFDKVVMTAEAVKQVEEMLA.

The interval 42 to 65 is disordered; that stretch reads TRAQKTRSEVSGGGAKPWRQKGTG.

The protein belongs to the universal ribosomal protein uL4 family. In terms of assembly, part of the 50S ribosomal subunit.

Functionally, one of the primary rRNA binding proteins, this protein initially binds near the 5'-end of the 23S rRNA. It is important during the early stages of 50S assembly. It makes multiple contacts with different domains of the 23S rRNA in the assembled 50S subunit and ribosome. Its function is as follows. Forms part of the polypeptide exit tunnel. The polypeptide is Large ribosomal subunit protein uL4 (Vibrio campbellii (strain ATCC BAA-1116)).